We begin with the raw amino-acid sequence, 612 residues long: Phragmoplastin DRP1D (612 aa).

Residue M1 is modified to N-acetylmethionine. Positions 32-301 (WEALPSVAVV…LESVIRSRIP (270 aa)) constitute a Dynamin-type G domain. Residues 42-49 (GGQSSGKS) form a G1 motif region. 45-50 (SSGKSS) is a GTP binding site. Residues 68-70 (VTR) are G2 motif. The G3 motif stretch occupies residues 143-146 (DLPG). The interval 212–215 (TKLD) is G4 motif. Residues 213–218 (KLDLMD) and 243–246 (NRSQ) contribute to the GTP site. A G5 motif region spans residues 242–245 (VNRS). The GED domain occupies 520–612 (FRKIASNVAA…DEIDAAVWVR (93 aa)).

The protein belongs to the TRAFAC class dynamin-like GTPase superfamily. Dynamin/Fzo/YdjA family. In terms of assembly, forms homodimer and may homooligomerize and heterooligomerize to form the phragmoplastin complex. Binds to PHIP1.

The protein localises to the cytoplasm. The protein resides in the cytoskeleton. It carries out the reaction GTP + H2O = GDP + phosphate + H(+). Functionally, putative microtubule-associated force-producing protein. Has a GTPase activity. The protein is Phragmoplastin DRP1D of Arabidopsis thaliana (Mouse-ear cress).